The following is a 500-amino-acid chain: Probable cytosol aminopeptidase (500 aa).

Mn(2+) contacts are provided by Lys-264 and Asp-269. Lys-276 is a catalytic residue. Asp-287, Asp-346, and Glu-348 together coordinate Mn(2+). Arg-350 is a catalytic residue.

It belongs to the peptidase M17 family. Mn(2+) serves as cofactor.

It is found in the cytoplasm. It carries out the reaction Release of an N-terminal amino acid, Xaa-|-Yaa-, in which Xaa is preferably Leu, but may be other amino acids including Pro although not Arg or Lys, and Yaa may be Pro. Amino acid amides and methyl esters are also readily hydrolyzed, but rates on arylamides are exceedingly low.. The enzyme catalyses Release of an N-terminal amino acid, preferentially leucine, but not glutamic or aspartic acids.. In terms of biological role, presumably involved in the processing and regular turnover of intracellular proteins. Catalyzes the removal of unsubstituted N-terminal amino acids from various peptides. The protein is Probable cytosol aminopeptidase of Rickettsia canadensis (strain McKiel).